Here is a 121-residue protein sequence, read N- to C-terminus: Large ribosomal subunit protein bL12 (121 aa).

This sequence belongs to the bacterial ribosomal protein bL12 family. Homodimer. Part of the ribosomal stalk of the 50S ribosomal subunit. Forms a multimeric L10(L12)X complex, where L10 forms an elongated spine to which 2 to 4 L12 dimers bind in a sequential fashion. Binds GTP-bound translation factors.

In terms of biological role, forms part of the ribosomal stalk which helps the ribosome interact with GTP-bound translation factors. Is thus essential for accurate translation. This chain is Large ribosomal subunit protein bL12, found in Serratia proteamaculans (strain 568).